A 715-amino-acid polypeptide reads, in one-letter code: Fatty acid oxidation complex subunit alpha (715 aa).

The enoyl-CoA hydratase/isomerase stretch occupies residues methionine 1–alanine 190. A substrate-binding site is contributed by aspartate 297. The 3-hydroxyacyl-CoA dehydrogenase stretch occupies residues histidine 312–asparagine 715. Residues methionine 325, aspartate 344, valine 401–glutamate 403, lysine 408, and serine 430 contribute to the NAD(+) site. Residue histidine 451 is the For 3-hydroxyacyl-CoA dehydrogenase activity of the active site. Residue asparagine 454 coordinates NAD(+). Substrate is bound by residues asparagine 501 and tyrosine 660.

In the N-terminal section; belongs to the enoyl-CoA hydratase/isomerase family. This sequence in the C-terminal section; belongs to the 3-hydroxyacyl-CoA dehydrogenase family. Heterotetramer of two alpha chains (FadB) and two beta chains (FadA).

The enzyme catalyses a (3S)-3-hydroxyacyl-CoA + NAD(+) = a 3-oxoacyl-CoA + NADH + H(+). The catalysed reaction is a (3S)-3-hydroxyacyl-CoA = a (2E)-enoyl-CoA + H2O. It catalyses the reaction a 4-saturated-(3S)-3-hydroxyacyl-CoA = a (3E)-enoyl-CoA + H2O. It carries out the reaction (3S)-3-hydroxybutanoyl-CoA = (3R)-3-hydroxybutanoyl-CoA. The enzyme catalyses a (3Z)-enoyl-CoA = a 4-saturated (2E)-enoyl-CoA. The catalysed reaction is a (3E)-enoyl-CoA = a 4-saturated (2E)-enoyl-CoA. The protein operates within lipid metabolism; fatty acid beta-oxidation. Functionally, involved in the aerobic and anaerobic degradation of long-chain fatty acids via beta-oxidation cycle. Catalyzes the formation of 3-oxoacyl-CoA from enoyl-CoA via L-3-hydroxyacyl-CoA. It can also use D-3-hydroxyacyl-CoA and cis-3-enoyl-CoA as substrate. The chain is Fatty acid oxidation complex subunit alpha from Ectopseudomonas oleovorans (Pseudomonas oleovorans).